Reading from the N-terminus, the 39-residue chain is Gas vesicle protein C (39 aa).

Belongs to the gas vesicle GvpC family.

The protein localises to the gas vesicle. In terms of biological role, confers stability, involved in shaping gas vesicles, hollow, gas filled proteinaceous nanostructures. During planktonic growth they allow positioning of the organism at a favorable depth for light or nutrient acquisition. This chain is Gas vesicle protein C, found in Spirulina sp. (strain CCAP 1475/10).